A 340-amino-acid polypeptide reads, in one-letter code: Protein HP_1247 (340 aa).

In terms of assembly, seems to interact with H.pylori HolB.

Its function is as follows. Could be the functional equivalent of DNA polymerase III delta subunit (HolA). In Helicobacter pylori (strain ATCC 700392 / 26695) (Campylobacter pylori), this protein is Protein HP_1247.